Consider the following 256-residue polypeptide: Large ribosomal subunit protein eL8A (256 aa).

The disordered stretch occupies residues Met1–Gly37. The segment covering Ser16–Lys32 has biased composition (polar residues).

This sequence belongs to the eukaryotic ribosomal protein eL8 family. In terms of assembly, component of the large ribosomal subunit (LSU). Mature yeast ribosomes consist of a small (40S) and a large (60S) subunit. The 40S small subunit contains 1 molecule of ribosomal RNA (18S rRNA) and 33 different proteins (encoded by 57 genes). The large 60S subunit contains 3 rRNA molecules (25S, 5.8S and 5S rRNA) and 46 different proteins (encoded by 81 genes).

It localises to the cytoplasm. Functionally, component of the ribosome, a large ribonucleoprotein complex responsible for the synthesis of proteins in the cell. The small ribosomal subunit (SSU) binds messenger RNAs (mRNAs) and translates the encoded message by selecting cognate aminoacyl-transfer RNA (tRNA) molecules. The large subunit (LSU) contains the ribosomal catalytic site termed the peptidyl transferase center (PTC), which catalyzes the formation of peptide bonds, thereby polymerizing the amino acids delivered by tRNAs into a polypeptide chain. The nascent polypeptides leave the ribosome through a tunnel in the LSU and interact with protein factors that function in enzymatic processing, targeting, and the membrane insertion of nascent chains at the exit of the ribosomal tunnel. This chain is Large ribosomal subunit protein eL8A, found in Saccharomyces cerevisiae (strain ATCC 204508 / S288c) (Baker's yeast).